Here is a 186-residue protein sequence, read N- to C-terminus: Testis-expressed protein 29 (186 aa).

Over 1–56 the chain is Extracellular; the sequence is MKDTKEIKRSPPHLLKKFAVCDIPLYDICDYNVTRERCRSLDCCFYRGVCYEKAVP. A helical transmembrane segment spans residues 57 to 77; the sequence is IYVQVFFTLIWFVAGAFIIAV. The Cytoplasmic portion of the chain corresponds to 78–151; that stretch reads IYRVIQGTKK…AGCCLWMKSK (74 aa). Disordered regions lie at residues 104-138 and 151-186; these read SPTP…KTES and KPAK…QAAP. The span at 108–133 shows a compositional bias: pro residues; sequence ELIPEPIPEPIPEPIPEPIREPPPPV.

The protein resides in the membrane. The protein is Testis-expressed protein 29 (Tex29) of Mus musculus (Mouse).